The primary structure comprises 46 residues: Mu-hexatoxin-Mg2a (46 aa).

Disulfide bonds link Cys-3/Cys-18, Cys-10/Cys-24, Cys-17/Cys-36, Cys-21/Cys-43, and Cys-26/Cys-34.

Belongs to the neurotoxin 02 (plectoxin) family. 02 (plectoxin) subfamily. In terms of tissue distribution, expressed by the venom gland.

The protein localises to the secreted. Competes for binding at site 3 of the insect voltage-gated sodium channel (Nav). Insecticidal neurotoxin. Causes temporary paralysis to lepidopteran larvae (10.3 nmol/g) or to crickets (doses from 0.93 to 119 ug/g). Is not toxic to mice when injected intracranially (high doses). The polypeptide is Mu-hexatoxin-Mg2a (Macrothele gigas (Japanese funnel web spider)).